The chain runs to 243 residues: 1-(5-phosphoribosyl)-5-[(5-phosphoribosylamino)methylideneamino] imidazole-4-carboxamide isomerase (243 aa).

Asp8 acts as the Proton acceptor in catalysis. Asp129 serves as the catalytic Proton donor.

It belongs to the HisA/HisF family.

It is found in the cytoplasm. The catalysed reaction is 1-(5-phospho-beta-D-ribosyl)-5-[(5-phospho-beta-D-ribosylamino)methylideneamino]imidazole-4-carboxamide = 5-[(5-phospho-1-deoxy-D-ribulos-1-ylimino)methylamino]-1-(5-phospho-beta-D-ribosyl)imidazole-4-carboxamide. Its pathway is amino-acid biosynthesis; L-histidine biosynthesis; L-histidine from 5-phospho-alpha-D-ribose 1-diphosphate: step 4/9. The protein is 1-(5-phosphoribosyl)-5-[(5-phosphoribosylamino)methylideneamino] imidazole-4-carboxamide isomerase of Brucella abortus (strain 2308).